Consider the following 95-residue polypeptide: Aspartyl/glutamyl-tRNA(Asn/Gln) amidotransferase subunit C (95 aa).

The protein belongs to the GatC family. Heterotrimer of A, B and C subunits.

The enzyme catalyses L-glutamyl-tRNA(Gln) + L-glutamine + ATP + H2O = L-glutaminyl-tRNA(Gln) + L-glutamate + ADP + phosphate + H(+). The catalysed reaction is L-aspartyl-tRNA(Asn) + L-glutamine + ATP + H2O = L-asparaginyl-tRNA(Asn) + L-glutamate + ADP + phosphate + 2 H(+). Allows the formation of correctly charged Asn-tRNA(Asn) or Gln-tRNA(Gln) through the transamidation of misacylated Asp-tRNA(Asn) or Glu-tRNA(Gln) in organisms which lack either or both of asparaginyl-tRNA or glutaminyl-tRNA synthetases. The reaction takes place in the presence of glutamine and ATP through an activated phospho-Asp-tRNA(Asn) or phospho-Glu-tRNA(Gln). This Bradyrhizobium sp. (strain ORS 278) protein is Aspartyl/glutamyl-tRNA(Asn/Gln) amidotransferase subunit C.